The sequence spans 225 residues: 3-dehydroquinate dehydratase (225 aa).

3-dehydroquinate-binding positions include 30–32 (EWR) and Arg-62. Residue His-118 is the Proton donor/acceptor of the active site. The Schiff-base intermediate with substrate role is filled by Lys-143. 3-dehydroquinate-binding residues include Arg-186 and Gln-209.

Belongs to the type-I 3-dehydroquinase family. In terms of assembly, homodimer.

The enzyme catalyses 3-dehydroquinate = 3-dehydroshikimate + H2O. It functions in the pathway metabolic intermediate biosynthesis; chorismate biosynthesis; chorismate from D-erythrose 4-phosphate and phosphoenolpyruvate: step 3/7. Functionally, involved in the third step of the chorismate pathway, which leads to the biosynthesis of aromatic amino acids. Catalyzes the cis-dehydration of 3-dehydroquinate (DHQ) and introduces the first double bond of the aromatic ring to yield 3-dehydroshikimate. In Streptococcus agalactiae serotype Ia (strain ATCC 27591 / A909 / CDC SS700), this protein is 3-dehydroquinate dehydratase.